Reading from the N-terminus, the 525-residue chain is GMP synthase [glutamine-hydrolyzing] (525 aa).

A Glutamine amidotransferase type-1 domain is found at 13–202 (TILVLDFGSQ…AVDLCHAKQN (190 aa)). Cysteine 89 functions as the Nucleophile in the catalytic mechanism. Active-site residues include histidine 176 and glutamate 178. Residues 203–400 (WTMKNFIGTE…LGISHELVWR (198 aa)) enclose the GMPS ATP-PPase domain. 231-237 (SGGVDST) serves as a coordination point for ATP. XMP contacts are provided by arginine 304, aspartate 462, lysine 517, and glutamate 523.

Homodimer. Mg(2+) is required as a cofactor.

The protein resides in the cytoplasm. The protein localises to the cytosol. The catalysed reaction is XMP + L-glutamine + ATP + H2O = GMP + L-glutamate + AMP + diphosphate + 2 H(+). Its pathway is purine metabolism; GMP biosynthesis; GMP from XMP (L-Gln route): step 1/1. In terms of biological role, catalyzes the conversion of xanthine monophosphate (XMP) to GMP in the presence of glutamine and ATP through an adenyl-XMP intermediate. This chain is GMP synthase [glutamine-hydrolyzing] (GUA1), found in Candida glabrata (strain ATCC 2001 / BCRC 20586 / JCM 3761 / NBRC 0622 / NRRL Y-65 / CBS 138) (Yeast).